Consider the following 378-residue polypeptide: Putative dioxygenase VC_1345 (378 aa).

Positions 288, 294, and 324 each coordinate Fe cation.

This sequence belongs to the homogentisate dioxygenase family. The cofactor is Fe cation.

The chain is Putative dioxygenase VC_1345 from Vibrio cholerae serotype O1 (strain ATCC 39315 / El Tor Inaba N16961).